The primary structure comprises 159 residues: Serine-protein kinase RsbW (159 aa).

The protein belongs to the anti-sigma-factor family.

It catalyses the reaction L-seryl-[protein] + ATP = O-phospho-L-seryl-[protein] + ADP + H(+). The enzyme catalyses L-threonyl-[protein] + ATP = O-phospho-L-threonyl-[protein] + ADP + H(+). In terms of biological role, negative regulator of sigma-B activity. Phosphorylates and inactivates its specific antagonist protein, RsbV. Upon phosphorylation of RsbV, RsbW is released and binds to sigma-B, thereby blocking its ability to form an RNA polymerase holoenzyme (E-sigma-B). The protein is Serine-protein kinase RsbW of Staphylococcus aureus.